A 103-amino-acid chain; its full sequence is Small ribosomal subunit protein uS10 (103 aa).

Belongs to the universal ribosomal protein uS10 family. As to quaternary structure, part of the 30S ribosomal subunit.

In terms of biological role, involved in the binding of tRNA to the ribosomes. This chain is Small ribosomal subunit protein uS10, found in Hydrogenovibrio crunogenus (strain DSM 25203 / XCL-2) (Thiomicrospira crunogena).